The following is a 66-amino-acid chain: uncharacterized protein (66 aa).

Residues 5 to 59 (LKYYRALHNLTQEDLAKKLGVSRQTIIAIEKGKYDPSLKLAFKIAKFFGVKIEDI) form the HTH cro/C1-type domain. A DNA-binding region (H-T-H motif) is located at residues 16-35 (QEDLAKKLGVSRQTIIAIEK).

This is an uncharacterized protein from Methanocaldococcus jannaschii (strain ATCC 43067 / DSM 2661 / JAL-1 / JCM 10045 / NBRC 100440) (Methanococcus jannaschii).